Consider the following 244-residue polypeptide: High frequency lysogenization protein HflD homolog (244 aa).

This sequence belongs to the HflD family.

It is found in the cytoplasm. Its subcellular location is the cell inner membrane. The protein is High frequency lysogenization protein HflD homolog of Acinetobacter baumannii (strain SDF).